A 121-amino-acid chain; its full sequence is Large ribosomal subunit protein bL12 (121 aa).

This sequence belongs to the bacterial ribosomal protein bL12 family. Homodimer. Part of the ribosomal stalk of the 50S ribosomal subunit. Forms a multimeric L10(L12)X complex, where L10 forms an elongated spine to which 2 to 4 L12 dimers bind in a sequential fashion. Binds GTP-bound translation factors.

In terms of biological role, forms part of the ribosomal stalk which helps the ribosome interact with GTP-bound translation factors. Is thus essential for accurate translation. This is Large ribosomal subunit protein bL12 from Shewanella frigidimarina (strain NCIMB 400).